We begin with the raw amino-acid sequence, 607 residues long: DNA mismatch repair protein MutL (607 aa).

The interval 374–411 is disordered; sequence RTEAGNEHVPSANRIQPPDPSIDMPDEPVPEQTDEPVA. The segment covering 397-407 has biased composition (acidic residues); sequence MPDEPVPEQTD.

This sequence belongs to the DNA mismatch repair MutL/HexB family.

Functionally, this protein is involved in the repair of mismatches in DNA. It is required for dam-dependent methyl-directed DNA mismatch repair. May act as a 'molecular matchmaker', a protein that promotes the formation of a stable complex between two or more DNA-binding proteins in an ATP-dependent manner without itself being part of a final effector complex. The polypeptide is DNA mismatch repair protein MutL (Exiguobacterium sibiricum (strain DSM 17290 / CCUG 55495 / CIP 109462 / JCM 13490 / 255-15)).